We begin with the raw amino-acid sequence, 363 residues long: Probable dual-specificity RNA methyltransferase RlmN (363 aa).

Catalysis depends on glutamate 106, which acts as the Proton acceptor. In terms of domain architecture, Radical SAM core spans 112 to 345 (HEYGNSVCVT…VTIRREQGHD (234 aa)). A disulfide bond links cysteine 119 and cysteine 350. [4Fe-4S] cluster contacts are provided by cysteine 126, cysteine 130, and cysteine 133. Residues 176–177 (GE), serine 208, 231–233 (SLH), and asparagine 307 each bind S-adenosyl-L-methionine. Cysteine 350 functions as the S-methylcysteine intermediate in the catalytic mechanism.

This sequence belongs to the radical SAM superfamily. RlmN family. [4Fe-4S] cluster is required as a cofactor.

Its subcellular location is the cytoplasm. The catalysed reaction is adenosine(2503) in 23S rRNA + 2 reduced [2Fe-2S]-[ferredoxin] + 2 S-adenosyl-L-methionine = 2-methyladenosine(2503) in 23S rRNA + 5'-deoxyadenosine + L-methionine + 2 oxidized [2Fe-2S]-[ferredoxin] + S-adenosyl-L-homocysteine. It carries out the reaction adenosine(37) in tRNA + 2 reduced [2Fe-2S]-[ferredoxin] + 2 S-adenosyl-L-methionine = 2-methyladenosine(37) in tRNA + 5'-deoxyadenosine + L-methionine + 2 oxidized [2Fe-2S]-[ferredoxin] + S-adenosyl-L-homocysteine. Functionally, specifically methylates position 2 of adenine 2503 in 23S rRNA and position 2 of adenine 37 in tRNAs. This chain is Probable dual-specificity RNA methyltransferase RlmN, found in Bacillus velezensis (strain DSM 23117 / BGSC 10A6 / LMG 26770 / FZB42) (Bacillus amyloliquefaciens subsp. plantarum).